The chain runs to 445 residues: Serine--tRNA ligase (445 aa).

229-231 (TAE) is an L-serine binding site. ATP contacts are provided by residues 260 to 262 (RKE) and Val276. Glu283 is an L-serine binding site. 347–350 (EVSS) serves as a coordination point for ATP. Ser383 contacts L-serine.

This sequence belongs to the class-II aminoacyl-tRNA synthetase family. Type-1 seryl-tRNA synthetase subfamily. Homodimer. The tRNA molecule binds across the dimer.

It is found in the cytoplasm. The enzyme catalyses tRNA(Ser) + L-serine + ATP = L-seryl-tRNA(Ser) + AMP + diphosphate + H(+). The catalysed reaction is tRNA(Sec) + L-serine + ATP = L-seryl-tRNA(Sec) + AMP + diphosphate + H(+). It participates in aminoacyl-tRNA biosynthesis; selenocysteinyl-tRNA(Sec) biosynthesis; L-seryl-tRNA(Sec) from L-serine and tRNA(Sec): step 1/1. Functionally, catalyzes the attachment of serine to tRNA(Ser). Is also able to aminoacylate tRNA(Sec) with serine, to form the misacylated tRNA L-seryl-tRNA(Sec), which will be further converted into selenocysteinyl-tRNA(Sec). The polypeptide is Serine--tRNA ligase (Thermomicrobium roseum (strain ATCC 27502 / DSM 5159 / P-2)).